The sequence spans 598 residues: Nitrate/nitrite sensor protein NarX (598 aa).

The Cytoplasmic portion of the chain corresponds to 1 to 14; that stretch reads MLKRCLSPLTLVNQ. Residues 15–37 traverse the membrane as a helical segment; sequence VALIVLLSTAIGLAGMAVSGWLV. Over 38–151 the chain is Periplasmic; sequence QGVQGSAHAI…DRTTEMRIET (114 aa). Residues 152–174 traverse the membrane as a helical segment; the sequence is VVLVHRVMAVFMALLLVFTIIWL. Residues 175–598 lie on the Cytoplasmic side of the membrane; the sequence is RARLLQPWRQ…FTDVQGDTHE (424 aa). Positions 176–228 constitute an HAMP domain; it reads ARLLQPWRQLLAMASAVSHRDFTQRANISGRNEMAMLGTALNNMSAELAESYA. Positions 393–587 constitute a Histidine kinase domain; that stretch reads TIARELHDSI…EVVVTFIPEK (195 aa). Residue His-399 is modified to Phosphohistidine; by autocatalysis.

The protein localises to the cell inner membrane. The catalysed reaction is ATP + protein L-histidine = ADP + protein N-phospho-L-histidine.. Functionally, acts as a sensor for nitrate/nitrite and transduces signal of nitrate availability to the NarL protein and of both nitrate/nitrite to the NarP protein. NarX probably activates NarL and NarP by phosphorylation in the presence of nitrate. NarX also plays a negative role in controlling NarL activity, probably through dephosphorylation in the absence of nitrate. The chain is Nitrate/nitrite sensor protein NarX (narX) from Escherichia coli O157:H7.